Consider the following 89-residue polypeptide: Large ribosomal subunit protein bL27 (89 aa).

A disordered region spans residues 1–22; sequence MAHKKAGGSSRNGRDSESKRLG.

It belongs to the bacterial ribosomal protein bL27 family.

The sequence is that of Large ribosomal subunit protein bL27 from Brucella abortus (strain S19).